The chain runs to 339 residues: Phomopsene synthase (339 aa).

Residues Asp-89, Asp-94, Asn-224, Ser-228, and Glu-232 each coordinate Mg(2+).

This sequence belongs to the terpene synthase family. Requires Mg(2+) as cofactor.

The catalysed reaction is (2E,6E,10E)-geranylgeranyl diphosphate = phomopsene + diphosphate. It catalyses the reaction (2E,6E,10E)-geranylgeranyl diphosphate = allokutznerene + diphosphate. It participates in secondary metabolite biosynthesis; terpenoid biosynthesis. In terms of biological role, diterpene synthase that catalyzes the conversion of geranylgeranyl diphosphate (GGPP) to phomopsene, a diterpene previously reported from the fungus P.amygdali. Phomopsene is the main product, but the enzyme can also produce allokutznerene (about 50% of phomopsene production activity) and traces of spiroviolene. Cannot use geranyl diphosphate (GPP), farnesyl diphosphate (FPP) and geranylfarnesyl diphosphate (GFPP). The protein is Phomopsene synthase of Allokutzneria albata (Kibdelosporangium albatum).